Here is a 104-residue protein sequence, read N- to C-terminus: Gastrin (104 aa).

Positions Met-1–Ala-21 are cleaved as a signal peptide. A propeptide spanning residues Ser-22–Arg-58 is cleaved from the precursor. The interval His-26–Ala-70 is disordered. At Tyr-87 the chain carries Sulfotyrosine. Position 92 is a phenylalanine amide (Phe-92). Residue Ser-96 is modified to Phosphoserine. Residues Ser-96–Pro-104 constitute a propeptide that is removed on maturation.

It belongs to the gastrin/cholecystokinin family. In terms of processing, sulfation enhances proteolytic processing, and blocks peptide degradation. Levels of sulfation differ between proteolytically-cleaved gastrins and between tissues.

The protein resides in the secreted. Functionally, gastrin stimulates the stomach mucosa to produce and secrete hydrochloric acid and the pancreas to secrete its digestive enzymes. It also stimulates smooth muscle contraction and increases blood circulation and water secretion in the stomach and intestine. The chain is Gastrin (GAST) from Ovis aries (Sheep).